A 378-amino-acid polypeptide reads, in one-letter code: AA13 family lytic polysaccharide monooxygenase A (378 aa).

The first 17 residues, 1–17 (MKWSVIQALALASGVQA), serve as a signal peptide directing secretion. His18 is a binding site for Cu(2+). At His18 the chain carries Methylhistidine. The Chitin-binding type-4 domain maps to 18 to 244 (HGYLTFPMSR…PQIYLTCADI (227 aa)). Cystine bridges form between Cys39–Cys42, Cys65–Cys241, Cys101–Cys199, Cys117–Cys144, Cys152–Cys160, Cys166–Cys172, and Cys180–Cys188. His108 contacts Cu(2+). Asn221 carries N-linked (GlcNAc...) asparagine glycosylation. Tyr238 is a binding site for Cu(2+). Residues 250–263 (DSQSPPTTTTTSTP) show a composition bias toward low complexity. Residues 250–272 (DSQSPPTTTTTSTPASPPPTSCA) are disordered. In terms of domain architecture, CBM20 spans 272–378 (ATPAASVAVT…GTATVDTAWK (107 aa)).

This sequence belongs to the polysaccharide monooxygenase AA13 family. The cofactor is Cu(2+). Post-translationally, O-mannosylated.

It is found in the secreted. It carries out the reaction starch + reduced acceptor + O2 = D-glucono-1,5-lactone-terminated malto-oligosaccharides + short-chain malto-oligosaccharides + acceptor + H2O.. Its activity is regulated as follows. Activity is inhibited by both beta-cyclodextrin or amylose that block the access to the active site. Starch-active lytic polysaccharide monooxygenase that oxidizes the C1 position of starch substrates. Catalysis by LPMOs requires the reduction of the active-site copper from Cu(II) to Cu(I) by a reducing agent and H(2)O(2) or O(2) as a cosubstrate. The sequence is that of AA13 family lytic polysaccharide monooxygenase A from Pyricularia oryzae (strain 70-15 / ATCC MYA-4617 / FGSC 8958) (Rice blast fungus).